The sequence spans 454 residues: Bifunctional protein GlmU (454 aa).

Residues 1–240 (MNVSVVILAA…EEEFMGVNSK (240 aa)) form a pyrophosphorylase region. UDP-N-acetyl-alpha-D-glucosamine-binding positions include 8–11 (LAAG), Lys22, and 87–88 (GT). Residue Asp119 participates in Mg(2+) binding. UDP-N-acetyl-alpha-D-glucosamine is bound by residues Gly152, Glu166, Asn181, and Asn238. Asn238 is a Mg(2+) binding site. Residues 241 to 261 (IQLACAQEIMLQRLREKAMEQ) form a linker region. The interval 262 to 454 (GVIMNLPHTI…SDKNEEKKEQ (193 aa)) is N-acetyltransferase. UDP-N-acetyl-alpha-D-glucosamine-binding residues include Arg325 and Lys342. His353 serves as the catalytic Proton acceptor. 2 residues coordinate UDP-N-acetyl-alpha-D-glucosamine: Tyr356 and Asn367. Acetyl-CoA contacts are provided by residues Ala370, 376–377 (NY), Ser395, Ala413, and Arg430.

It in the N-terminal section; belongs to the N-acetylglucosamine-1-phosphate uridyltransferase family. The protein in the C-terminal section; belongs to the transferase hexapeptide repeat family. Homotrimer. The cofactor is Mg(2+).

It localises to the cytoplasm. The enzyme catalyses alpha-D-glucosamine 1-phosphate + acetyl-CoA = N-acetyl-alpha-D-glucosamine 1-phosphate + CoA + H(+). The catalysed reaction is N-acetyl-alpha-D-glucosamine 1-phosphate + UTP + H(+) = UDP-N-acetyl-alpha-D-glucosamine + diphosphate. Its pathway is nucleotide-sugar biosynthesis; UDP-N-acetyl-alpha-D-glucosamine biosynthesis; N-acetyl-alpha-D-glucosamine 1-phosphate from alpha-D-glucosamine 6-phosphate (route II): step 2/2. It functions in the pathway nucleotide-sugar biosynthesis; UDP-N-acetyl-alpha-D-glucosamine biosynthesis; UDP-N-acetyl-alpha-D-glucosamine from N-acetyl-alpha-D-glucosamine 1-phosphate: step 1/1. It participates in bacterial outer membrane biogenesis; LPS lipid A biosynthesis. Its function is as follows. Catalyzes the last two sequential reactions in the de novo biosynthetic pathway for UDP-N-acetylglucosamine (UDP-GlcNAc). The C-terminal domain catalyzes the transfer of acetyl group from acetyl coenzyme A to glucosamine-1-phosphate (GlcN-1-P) to produce N-acetylglucosamine-1-phosphate (GlcNAc-1-P), which is converted into UDP-GlcNAc by the transfer of uridine 5-monophosphate (from uridine 5-triphosphate), a reaction catalyzed by the N-terminal domain. This is Bifunctional protein GlmU from Helicobacter hepaticus (strain ATCC 51449 / 3B1).